Here is a 205-residue protein sequence, read N- to C-terminus: Phospholipase D (205 aa).

An N-terminal signal peptide occupies residues 1–22 (MKSKNNKFIAVSISFILGIALG). One can recognise a PLD phosphodiesterase domain in the interval 142–169 (VPGIAHNKVIIIDKKKVITGSFNFTVSA). Active-site residues include histidine 147, lysine 149, and aspartate 154.

This sequence belongs to the phospholipase D family. Homodimer.

It is found in the secreted. The catalysed reaction is a 1,2-diacyl-sn-glycero-3-phosphocholine + H2O = a 1,2-diacyl-sn-glycero-3-phosphate + choline + H(+). Its function is as follows. Could be a virulence factor. This chain is Phospholipase D (pld), found in Rickettsia prowazekii (strain Madrid E).